Here is a 378-residue protein sequence, read N- to C-terminus: O-methyltransferase gsfD (378 aa).

Residues 219–220 (GG), aspartate 244, 266–267 (DM), and arginine 282 each bind S-adenosyl-L-methionine. Catalysis depends on histidine 286, which acts as the Proton acceptor.

This sequence belongs to the class I-like SAM-binding methyltransferase superfamily. Cation-independent O-methyltransferase family.

The enzyme catalyses desmethyl-dehydrogriseofulvin + S-adenosyl-L-methionine = dehydrogriseofulvin + S-adenosyl-L-homocysteine + H(+). It participates in secondary metabolite biosynthesis; terpenoid biosynthesis. O-methyltransferase; part of the gene cluster that mediates the biosynthesis of griseofulvin, an important antifungal drug that has been in use for a long time for treating dermatophyte infections. The first step of the pathway is the formation of the heptaketide backbone by gsfA which is initiated by priming with acetyl-CoA, followed by sequential condensations of 6 malonyl-CoA units. The resulting benzophenone can undergo a spontaneous dehydration to form norlichexanthone. However, the true precursor for the griseofulvin biosynthesis is not norlichexanthone, but the heptaketide benzophenone that is O-methylated at 3-OH by gsfB to produce griseophenone D which is further methylated at 9-OH by gsfC to yield griseophenone C. Griseophenone C is then substrate of halogenase gsfI which is responsible for the regio-specific chlorination at the C13 position to form griseophenone B. The cytochrome P450 gsfF catalyzes the coupling of orcinol and phloroglucinol rings in griseophenone B to form desmethyl-dehydrogriseofulvin A which is further methylated at 5-OH by gsfD to yield dehydrogriseofulvin. Finally, gsfE performs stereospecific reduction of enone 18 of dehydrogriseofulvin to afford the final product griseofulvin. The polypeptide is O-methyltransferase gsfD (Penicillium aethiopicum).